Here is a 110-residue protein sequence, read N- to C-terminus: Large ribosomal subunit protein uL22 (110 aa).

This sequence belongs to the universal ribosomal protein uL22 family. As to quaternary structure, part of the 50S ribosomal subunit.

In terms of biological role, this protein binds specifically to 23S rRNA; its binding is stimulated by other ribosomal proteins, e.g. L4, L17, and L20. It is important during the early stages of 50S assembly. It makes multiple contacts with different domains of the 23S rRNA in the assembled 50S subunit and ribosome. Functionally, the globular domain of the protein is located near the polypeptide exit tunnel on the outside of the subunit, while an extended beta-hairpin is found that lines the wall of the exit tunnel in the center of the 70S ribosome. The chain is Large ribosomal subunit protein uL22 from Geobacter metallireducens (strain ATCC 53774 / DSM 7210 / GS-15).